The primary structure comprises 422 residues: Metallocarboxypeptidase A (422 aa).

A signal peptide spans 1–17; it reads MRSVLSLALLAANVVTA. The propeptide at 18–112 is activation peptide; the sequence is AVVSPFDYSG…FEAYSAGYAP (95 aa). Residues 119–419 enclose the Peptidase M14 domain; that stretch reads SYHSYQDHIS…AGTVAMLKAV (301 aa). Zn(2+)-binding residues include His-179 and Glu-182. Substrate-binding positions include 179 to 182, Arg-237, and 254 to 255; these read HARE and NR. An intrachain disulfide couples Cys-248 to Cys-271. A Zn(2+)-binding site is contributed by His-309. Position 310 to 311 (310 to 311) interacts with substrate; it reads SY. Glu-385 acts as the Proton donor/acceptor in catalysis.

The protein belongs to the peptidase M14 family. Zn(2+) is required as a cofactor.

It is found in the secreted. Extracellular metalloprotease that contributes to pathogenicity. In Trichophyton equinum (Horse ringworm fungus), this protein is Metallocarboxypeptidase A (MCPA).